Consider the following 355-residue polypeptide: Alanine racemase (355 aa).

Lys-34 acts as the Proton acceptor; specific for D-alanine in catalysis. Lys-34 carries the N6-(pyridoxal phosphate)lysine modification. Substrate is bound at residue Arg-133. Catalysis depends on Tyr-249, which acts as the Proton acceptor; specific for L-alanine. Substrate is bound at residue Met-297.

It belongs to the alanine racemase family. Requires pyridoxal 5'-phosphate as cofactor.

It carries out the reaction L-alanine = D-alanine. It functions in the pathway amino-acid biosynthesis; D-alanine biosynthesis; D-alanine from L-alanine: step 1/1. In terms of biological role, catalyzes the interconversion of L-alanine and D-alanine. May also act on other amino acids. The polypeptide is Alanine racemase (alr) (Rickettsia rickettsii (strain Sheila Smith)).